A 444-amino-acid polypeptide reads, in one-letter code: Exodeoxyribonuclease 7 large subunit (444 aa).

This sequence belongs to the XseA family. In terms of assembly, heterooligomer composed of large and small subunits.

The protein resides in the cytoplasm. The enzyme catalyses Exonucleolytic cleavage in either 5'- to 3'- or 3'- to 5'-direction to yield nucleoside 5'-phosphates.. In terms of biological role, bidirectionally degrades single-stranded DNA into large acid-insoluble oligonucleotides, which are then degraded further into small acid-soluble oligonucleotides. This chain is Exodeoxyribonuclease 7 large subunit, found in Pseudoalteromonas translucida (strain TAC 125).